The following is a 353-amino-acid chain: UDP-N-acetylglucosamine--N-acetylmuramyl-(pentapeptide) pyrophosphoryl-undecaprenol N-acetylglucosamine transferase (353 aa).

Residues 14-16, asparagine 126, arginine 162, serine 190, isoleucine 243, 262-267, and glutamine 287 each bind UDP-N-acetyl-alpha-D-glucosamine; these read TGG and ALTVSE.

It belongs to the glycosyltransferase 28 family. MurG subfamily.

The protein resides in the cell inner membrane. The enzyme catalyses di-trans,octa-cis-undecaprenyl diphospho-N-acetyl-alpha-D-muramoyl-L-alanyl-D-glutamyl-meso-2,6-diaminopimeloyl-D-alanyl-D-alanine + UDP-N-acetyl-alpha-D-glucosamine = di-trans,octa-cis-undecaprenyl diphospho-[N-acetyl-alpha-D-glucosaminyl-(1-&gt;4)]-N-acetyl-alpha-D-muramoyl-L-alanyl-D-glutamyl-meso-2,6-diaminopimeloyl-D-alanyl-D-alanine + UDP + H(+). Its pathway is cell wall biogenesis; peptidoglycan biosynthesis. Cell wall formation. Catalyzes the transfer of a GlcNAc subunit on undecaprenyl-pyrophosphoryl-MurNAc-pentapeptide (lipid intermediate I) to form undecaprenyl-pyrophosphoryl-MurNAc-(pentapeptide)GlcNAc (lipid intermediate II). The chain is UDP-N-acetylglucosamine--N-acetylmuramyl-(pentapeptide) pyrophosphoryl-undecaprenol N-acetylglucosamine transferase from Vibrio atlanticus (strain LGP32) (Vibrio splendidus (strain Mel32)).